Reading from the N-terminus, the 227-residue chain is Cytochrome c oxidase subunit 2 (227 aa).

Residues 1-14 (MAYPFQLGLQDASS) are Mitochondrial intermembrane-facing. Residues 15-45 (PIMEELMNFHDHTLMIVFLISSLVLYLMALM) form a helical membrane-spanning segment. The Mitochondrial matrix portion of the chain corresponds to 46–59 (LSTKLIHTSTMDAQ). The helical transmembrane segment at 60–87 (EVETIWTILPAIILIMIALPSLRILYMM) threads the bilayer. At 88-227 (DEINNPILTV…LFENWSMSMT (140 aa)) the chain is on the mitochondrial intermembrane side. Cu cation-binding residues include histidine 161, cysteine 196, glutamate 198, cysteine 200, histidine 204, and methionine 207. Residue glutamate 198 participates in Mg(2+) binding.

It belongs to the cytochrome c oxidase subunit 2 family. In terms of assembly, component of the cytochrome c oxidase (complex IV, CIV), a multisubunit enzyme composed of 14 subunits. The complex is composed of a catalytic core of 3 subunits MT-CO1, MT-CO2 and MT-CO3, encoded in the mitochondrial DNA, and 11 supernumerary subunits COX4I, COX5A, COX5B, COX6A, COX6B, COX6C, COX7A, COX7B, COX7C, COX8 and NDUFA4, which are encoded in the nuclear genome. The complex exists as a monomer or a dimer and forms supercomplexes (SCs) in the inner mitochondrial membrane with NADH-ubiquinone oxidoreductase (complex I, CI) and ubiquinol-cytochrome c oxidoreductase (cytochrome b-c1 complex, complex III, CIII), resulting in different assemblies (supercomplex SCI(1)III(2)IV(1) and megacomplex MCI(2)III(2)IV(2)). Found in a complex with TMEM177, COA6, COX18, COX20, SCO1 and SCO2. Interacts with TMEM177 in a COX20-dependent manner. Interacts with COX20. Interacts with COX16. It depends on Cu cation as a cofactor.

The protein resides in the mitochondrion inner membrane. It catalyses the reaction 4 Fe(II)-[cytochrome c] + O2 + 8 H(+)(in) = 4 Fe(III)-[cytochrome c] + 2 H2O + 4 H(+)(out). Functionally, component of the cytochrome c oxidase, the last enzyme in the mitochondrial electron transport chain which drives oxidative phosphorylation. The respiratory chain contains 3 multisubunit complexes succinate dehydrogenase (complex II, CII), ubiquinol-cytochrome c oxidoreductase (cytochrome b-c1 complex, complex III, CIII) and cytochrome c oxidase (complex IV, CIV), that cooperate to transfer electrons derived from NADH and succinate to molecular oxygen, creating an electrochemical gradient over the inner membrane that drives transmembrane transport and the ATP synthase. Cytochrome c oxidase is the component of the respiratory chain that catalyzes the reduction of oxygen to water. Electrons originating from reduced cytochrome c in the intermembrane space (IMS) are transferred via the dinuclear copper A center (CU(A)) of subunit 2 and heme A of subunit 1 to the active site in subunit 1, a binuclear center (BNC) formed by heme A3 and copper B (CU(B)). The BNC reduces molecular oxygen to 2 water molecules using 4 electrons from cytochrome c in the IMS and 4 protons from the mitochondrial matrix. This Gerbillus gerbillus (Lesser Egyptian gerbil) protein is Cytochrome c oxidase subunit 2 (MT-CO2).